The chain runs to 525 residues: Cyclic AMP-responsive element-binding protein 3-like protein 2 (525 aa).

The Cytoplasmic portion of the chain corresponds to 1–382 (MEIMESGDPV…SCKAAGTQTG (382 aa)). 3 disordered regions span residues 85 to 104 (LCGD…DDNF), 203 to 267 (EALQ…QGSG), and 309 to 338 (NKIS…SSEN). Composition is skewed to polar residues over residues 90-102 (RPQS…SSDD) and 213-239 (SSHG…QSQA). A bZIP domain is found at 299-362 (ALKKIRRKIK…RTLLQQLQRL (64 aa)). The basic motif stretch occupies residues 301 to 330 (KKIRRKIKNKISAQESRRKKKEYMDSLEKR). Basic and acidic residues predominate over residues 322–332 (EYMDSLEKRVE). The leucine-zipper stretch occupies residues 341 to 362 (LRKKVEVLESTNRTLLQQLQRL). The helical; Signal-anchor for type II membrane protein transmembrane segment at 383–403 (TCLMMVVLCFAVIFGSFTQNL) threads the bilayer. Residues 404 to 525 (DMYSSSSKTI…ELDRTVNTTS (122 aa)) are Lumenal-facing. The S1P recognition motif lies at 433–436 (RKLL). Residues asparagine 490, asparagine 509, and asparagine 522 are each glycosylated (N-linked (GlcNAc...) asparagine).

The protein belongs to the bZIP family. ATF subfamily. As to quaternary structure, binds DNA as a dimer. In terms of processing, upon ER stress, translocated to the Golgi apparatus, where it is processed by regulated intramembrane proteolysis (RIP) to release the cytosol-facing N-terminal transcription factor domain. The cleavage is performed sequentially by site-1 and site-2 proteases (S1P/mbtps1 and S2P/mbtps2).

It localises to the endoplasmic reticulum membrane. Its subcellular location is the nucleus. Transcription factor involved in unfolded protein response (UPR). In the absence of endoplasmic reticulum (ER) stress, inserted into ER membranes, with N-terminal DNA-binding and transcription activation domains oriented toward the cytosolic face of the membrane. In response to ER stress, transported to the Golgi, where it is cleaved in a site-specific manner by resident proteases S1P/mbtps1 and S2P/mbtps2. The released N-terminal cytosolic domain is translocated to the nucleus to effect transcription of specific target genes. Plays a critical role in chondrogenesis. May protect neuroblastoma cells from ER stress-induced death. In vitro activates transcription of target genes via direct binding to the CRE site. This chain is Cyclic AMP-responsive element-binding protein 3-like protein 2 (creb3l2), found in Xenopus laevis (African clawed frog).